Here is a 284-residue protein sequence, read N- to C-terminus: Bifunctional protein FolD (284 aa).

Residue 166–168 (GAS) participates in NADP(+) binding.

This sequence belongs to the tetrahydrofolate dehydrogenase/cyclohydrolase family. Homodimer.

It catalyses the reaction (6R)-5,10-methylene-5,6,7,8-tetrahydrofolate + NADP(+) = (6R)-5,10-methenyltetrahydrofolate + NADPH. The catalysed reaction is (6R)-5,10-methenyltetrahydrofolate + H2O = (6R)-10-formyltetrahydrofolate + H(+). The protein operates within one-carbon metabolism; tetrahydrofolate interconversion. Catalyzes the oxidation of 5,10-methylenetetrahydrofolate to 5,10-methenyltetrahydrofolate and then the hydrolysis of 5,10-methenyltetrahydrofolate to 10-formyltetrahydrofolate. The chain is Bifunctional protein FolD from Nitrosococcus oceani (strain ATCC 19707 / BCRC 17464 / JCM 30415 / NCIMB 11848 / C-107).